A 190-amino-acid chain; its full sequence is Protein GrpE (190 aa).

Disordered stretches follow at residues Met1 to Ile22 and Glu170 to Ser190. Over residues Ala181–Ser190 the composition is skewed to basic residues.

The protein belongs to the GrpE family. In terms of assembly, homodimer.

Its subcellular location is the cytoplasm. Participates actively in the response to hyperosmotic and heat shock by preventing the aggregation of stress-denatured proteins, in association with DnaK and GrpE. It is the nucleotide exchange factor for DnaK and may function as a thermosensor. Unfolded proteins bind initially to DnaJ; upon interaction with the DnaJ-bound protein, DnaK hydrolyzes its bound ATP, resulting in the formation of a stable complex. GrpE releases ADP from DnaK; ATP binding to DnaK triggers the release of the substrate protein, thus completing the reaction cycle. Several rounds of ATP-dependent interactions between DnaJ, DnaK and GrpE are required for fully efficient folding. This is Protein GrpE from Leptospira biflexa serovar Patoc (strain Patoc 1 / Ames).